A 352-amino-acid polypeptide reads, in one-letter code: C-C chemokine receptor type 5 (352 aa).

Residues 1 to 30 (MDYQVSSPTYDIDYYTSEPCQKINVKQIAA) are Extracellular-facing. The residue at position 3 (Tyr-3) is a Sulfotyrosine. Residues Ser-6 and Ser-7 are each glycosylated (O-linked (GalNAc...) serine). Residues Tyr-10, Tyr-14, and Tyr-15 each carry the sulfotyrosine modification. 2 cysteine pairs are disulfide-bonded: Cys-20–Cys-269 and Cys-101–Cys-178. A helical transmembrane segment spans residues 31–58 (RLLPPLYSLVFIFGFVGNILVVLILINC). Topologically, residues 59 to 68 (KRLKSMTDIY) are cytoplasmic. Residues 69-89 (LLNLAISDLLFLLTVPFWAHY) form a helical membrane-spanning segment. Over 90-102 (AAAQWDFGNTMCQ) the chain is Extracellular. Residues 103 to 124 (LLTGLYFIGFFSGIFFIILLTI) traverse the membrane as a helical segment. The Cytoplasmic segment spans residues 125 to 141 (DRYLAIVHAVFALKART). Residues 142-166 (VTFGVVTSVITWVVAVFASLPGIIF) form a helical membrane-spanning segment. The Extracellular segment spans residues 167–198 (TRSQREGLHYTCSSHFPYSQYQFWKNFQTLKI). The helical transmembrane segment at 199–218 (VILGLVLPLLVMVICYSGIL) threads the bilayer. Topologically, residues 219–235 (KTLLRCRNEKKRHRAVR) are cytoplasmic. Residues 236–260 (LIFTIMIVYFLFWAPYNIVLLLNTF) form a helical membrane-spanning segment. Residues 261–277 (QEFFGLNNCSSSNRLDQ) lie on the Extracellular side of the membrane. Residues 278 to 301 (AMQVTETLGMTHCCINPIIYAFVG) form a helical membrane-spanning segment. Topologically, residues 302–352 (EKFRNYLLVFFQKHIAKRFCKCCSIFQQEAPERASSVYTRSTGEQEISVGL) are cytoplasmic. Residues Cys-321, Cys-323, and Cys-324 are each lipidated (S-palmitoyl cysteine). Ser-336, Ser-337, Ser-342, and Ser-349 each carry phosphoserine; by BARK1.

It belongs to the G-protein coupled receptor 1 family. Interacts with PRAF2. Efficient ligand binding to CCL3/MIP-1alpha and CCL4/MIP-1beta requires sulfation, O-glycosylation and sialic acid modifications. Glycosylation on Ser-6 is required for efficient binding of CCL4. Interacts with GRK2. Interacts with ARRB1 and ARRB2. Interacts with CNIH4. Interacts with S100A4; this interaction stimulates T-lymphocyte chemotaxis. Sulfated on at least 2 of the N-terminal tyrosines. Sulfation is required for efficient binding of the chemokines, CCL3 and CCL4. In terms of processing, palmitoylation in the C-terminal is important for cell surface expression. Post-translationally, phosphorylation on serine residues in the C-terminal is stimulated by binding CC chemokines especially by APO-RANTES. O-glycosylated, but not N-glycosylated. Ser-6 appears to be the major site even if Ser-7 may be also O-glycosylated. Also sialylated glycans present which contribute to chemokine binding. Thr-16 and Ser-17 may also be glycosylated and, if so, with small moieties such as a T-antigen.

It localises to the cell membrane. Receptor for a number of inflammatory CC-chemokines including CCL3/MIP-1-alpha, CCL4/MIP-1-beta and RANTES and subsequently transduces a signal by increasing the intracellular calcium ion level. May play a role in the control of granulocytic lineage proliferation or differentiation. Participates in T-lymphocyte migration to the infection site by acting as a chemotactic receptor. This Papio anubis (Olive baboon) protein is C-C chemokine receptor type 5 (CCR5).